An 843-amino-acid polypeptide reads, in one-letter code: Glycogen phosphorylase, brain form (843 aa).

A2 is modified (N-acetylalanine). S15 is modified (phosphoserine; by PHK; in form phosphorylase A). AMP contacts are provided by D43, Y197, and R310. Position 197 is a phosphotyrosine (Y197). Y473 is modified (phosphotyrosine). K569 serves as a coordination point for pyridoxal 5'-phosphate. Residues 677 to 678 (TG) form a pyridoxal 5'-phosphate region. K681 is subject to N6-(pyridoxal phosphate)lysine.

This sequence belongs to the glycogen phosphorylase family. Homodimer. Dimers associate into a tetramer to form the enzymatically active phosphorylase A. Pyridoxal 5'-phosphate is required as a cofactor. Phosphorylation of Ser-15 converts phosphorylase B (unphosphorylated) to phosphorylase A.

The catalysed reaction is [(1-&gt;4)-alpha-D-glucosyl](n) + phosphate = [(1-&gt;4)-alpha-D-glucosyl](n-1) + alpha-D-glucose 1-phosphate. With respect to regulation, activity of phosphorylase is controlled both by allosteric means (through the non-covalent binding of metabolites) and by covalent modification. Thus AMP allosterically activates, whereas ATP, ADP, and glucose-6-phosphate allosterically inhibit, phosphorylase B. Glycogen phosphorylase that regulates glycogen mobilization. Phosphorylase is an important allosteric enzyme in carbohydrate metabolism. Enzymes from different sources differ in their regulatory mechanisms and in their natural substrates. However, all known phosphorylases share catalytic and structural properties. The polypeptide is Glycogen phosphorylase, brain form (PYGB) (Pongo abelii (Sumatran orangutan)).